The sequence spans 298 residues: Lipoyl synthase (298 aa).

C40, C45, C51, C67, C71, C74, and S280 together coordinate [4Fe-4S] cluster. Positions 53–269 (AVRKTATFMI…KEIALSKGFS (217 aa)) constitute a Radical SAM core domain.

This sequence belongs to the radical SAM superfamily. Lipoyl synthase family. [4Fe-4S] cluster serves as cofactor.

It is found in the cytoplasm. It catalyses the reaction [[Fe-S] cluster scaffold protein carrying a second [4Fe-4S](2+) cluster] + N(6)-octanoyl-L-lysyl-[protein] + 2 oxidized [2Fe-2S]-[ferredoxin] + 2 S-adenosyl-L-methionine + 4 H(+) = [[Fe-S] cluster scaffold protein] + N(6)-[(R)-dihydrolipoyl]-L-lysyl-[protein] + 4 Fe(3+) + 2 hydrogen sulfide + 2 5'-deoxyadenosine + 2 L-methionine + 2 reduced [2Fe-2S]-[ferredoxin]. The protein operates within protein modification; protein lipoylation via endogenous pathway; protein N(6)-(lipoyl)lysine from octanoyl-[acyl-carrier-protein]. In terms of biological role, catalyzes the radical-mediated insertion of two sulfur atoms into the C-6 and C-8 positions of the octanoyl moiety bound to the lipoyl domains of lipoate-dependent enzymes, thereby converting the octanoylated domains into lipoylated derivatives. The protein is Lipoyl synthase of Bacillus mycoides (strain KBAB4) (Bacillus weihenstephanensis).